The following is a 362-amino-acid chain: tRNA/tmRNA (uracil-C(5))-methyltransferase (362 aa).

S-adenosyl-L-methionine-binding residues include Gln-186, Tyr-214, Asn-219, Glu-235, and Asp-295. Cys-320 (nucleophile) is an active-site residue. Glu-354 functions as the Proton acceptor in the catalytic mechanism.

It belongs to the class I-like SAM-binding methyltransferase superfamily. RNA M5U methyltransferase family. TrmA subfamily.

The enzyme catalyses uridine(54) in tRNA + S-adenosyl-L-methionine = 5-methyluridine(54) in tRNA + S-adenosyl-L-homocysteine + H(+). It catalyses the reaction uridine(341) in tmRNA + S-adenosyl-L-methionine = 5-methyluridine(341) in tmRNA + S-adenosyl-L-homocysteine + H(+). Dual-specificity methyltransferase that catalyzes the formation of 5-methyluridine at position 54 (m5U54) in all tRNAs, and that of position 341 (m5U341) in tmRNA (transfer-mRNA). In Dechloromonas aromatica (strain RCB), this protein is tRNA/tmRNA (uracil-C(5))-methyltransferase.